The sequence spans 108 residues: ATPase inhibitor, mitochondrial (108 aa).

Residues 1–25 (MAATALAVRSRIGAWSVWAMQSRGF) constitute a mitochondrion transit peptide. The segment at 25 to 48 (FSSDTPEGVRSGAGAVRDAGGAFG) is disordered. The interval 26 to 52 (SSDTPEGVRSGAGAVRDAGGAFGKKEQ) is N-terminal inhibitory region. Residues 69–108 (ALKKHHENEISHHVKEIERLQKEIERHKQSIKKLKNDDDD) adopt a coiled-coil conformation. The segment at 74–106 (HENEISHHVKEIERLQKEIERHKQSIKKLKNDD) is antiparallel alpha-helical coiled coil region. Residue lysine 103 is modified to N6-succinyllysine.

The protein belongs to the ATPase inhibitor family. In terms of assembly, homodimer; represents the active form and is present at a pH value below 6.5. Homotetramer; represents the inactive form and is present at a pH value above 7.0.

It is found in the mitochondrion. Functionally, endogenous F(1)F(o)-ATPase inhibitor limiting ATP depletion when the mitochondrial membrane potential falls below a threshold and the F(1)F(o)-ATP synthase starts hydrolyzing ATP to pump protons out of the mitochondrial matrix. Required to avoid the consumption of cellular ATP when the F(1)F(o)-ATP synthase enzyme acts as an ATP hydrolase. Indirectly acts as a regulator of heme synthesis in erythroid tissues: regulates heme synthesis by modulating the mitochondrial pH and redox potential, allowing FECH to efficiently catalyze the incorporation of iron into protoporphyrin IX to produce heme. The chain is ATPase inhibitor, mitochondrial from Sus scrofa (Pig).